We begin with the raw amino-acid sequence, 88 residues long: Small ribosomal subunit protein bS20 (88 aa).

A disordered region spans residues Met-1–Ser-26. Residues Ala-7 to Gln-19 are compositionally biased toward basic residues.

Belongs to the bacterial ribosomal protein bS20 family.

In terms of biological role, binds directly to 16S ribosomal RNA. In Psychrobacter cryohalolentis (strain ATCC BAA-1226 / DSM 17306 / VKM B-2378 / K5), this protein is Small ribosomal subunit protein bS20.